The primary structure comprises 177 residues: 2''-aminoglycoside nucleotidyltransferase (177 aa).

Mg(2+) is bound by residues aspartate 44, aspartate 46, and aspartate 86. Aspartate 86 serves as the catalytic Proton acceptor.

Requires Mg(2+) as cofactor.

The catalysed reaction is nucleoside triphosphate + gentamicin = diphosphate + 2''-nucleotidylgentamicin.. Functionally, mediates bacterial resistance to kanamycin, gentamicin, dibekacin, sisomicin, neomycin and tobramycin by adenylating the 2''-hydroxyl group of these antibiotics. The protein is 2''-aminoglycoside nucleotidyltransferase (aadB) of Klebsiella pneumoniae.